The primary structure comprises 483 residues: Probable apyrase 3 (483 aa).

Topologically, residues 1–29 are cytoplasmic; the sequence is MTPETDALKVQILPKHQSLPYTVTKAKSK. A helical; Signal-anchor for type II membrane protein transmembrane segment spans residues 30 to 50; that stretch reads SLILLVVVSVTITLGLLLYVF. The Extracellular portion of the chain corresponds to 51–483; the sequence is NSNSVISSGS…NGKSRKYLGF (433 aa). 72-82 lines the ATP pocket; that stretch reads VLIDAGSSGTR. E195 (proton acceptor) is an active-site residue. 219 to 229 contributes to the ATP binding site; sequence GIVELGGASAQ. 4 N-linked (GlcNAc...) asparagine glycosylation sites follow: N250, N281, N305, and N326.

The protein belongs to the GDA1/CD39 NTPase family. It depends on Ca(2+) as a cofactor. In terms of tissue distribution, expressed in the initiation zone of lateral root and in the lateral root tip, the adaxial junction of lateral shoots with the stems, and in the abscission zone of flower organs. Not expressed in the rosette leaves.

The protein localises to the membrane. It catalyses the reaction a ribonucleoside 5'-triphosphate + 2 H2O = a ribonucleoside 5'-phosphate + 2 phosphate + 2 H(+). Functionally, catalyzes the hydrolysis of phosphoanhydride bonds of nucleoside tri- and di-phosphates. In Arabidopsis thaliana (Mouse-ear cress), this protein is Probable apyrase 3 (APY3).